The sequence spans 343 residues: MTKTMLRALKGETLPTPPIWLMRQAGRYLPEYRATRAQAGDFLSLCYTPDLAAEVTLQPIRRYGFDAAILFADILLLPQALGADLWFETGEGPRMSTITDMAGVTALKGRDDIHETLAPVYETCRILARELPKETTFIGFAGMPWTVATYMIAGRGSKDQAAAHKLKDTDRPAFEALMDRVTEATIEYLAKQVEAGCEVVKLFDSWAGSLKGQDFEDFAVAPAKRIVSELKARFPGLPVIAFPREAGEGYIGFAEKTGADCVAIDNSVSPEWAAEKVQAGRTCVQGNLDPKYMVTGGEELVQATKRVVEAFRNGPHIFNLGHGITPEADPENVTLLVETIRGK.

Substrate contacts are provided by residues 23–27 (RQAGR), Asp-73, Tyr-150, Ser-205, and His-322.

The protein belongs to the uroporphyrinogen decarboxylase family. As to quaternary structure, homodimer.

The protein localises to the cytoplasm. The enzyme catalyses uroporphyrinogen III + 4 H(+) = coproporphyrinogen III + 4 CO2. It participates in porphyrin-containing compound metabolism; protoporphyrin-IX biosynthesis; coproporphyrinogen-III from 5-aminolevulinate: step 4/4. In terms of biological role, catalyzes the decarboxylation of four acetate groups of uroporphyrinogen-III to yield coproporphyrinogen-III. In Cereibacter sphaeroides (strain KD131 / KCTC 12085) (Rhodobacter sphaeroides), this protein is Uroporphyrinogen decarboxylase.